Consider the following 189-residue polypeptide: Thymidine kinase (189 aa).

Residues 9-16 and 85-88 contribute to the ATP site; these read GTMNSGKS and DEAQ. Glutamate 86 (proton acceptor) is an active-site residue. Zn(2+) contacts are provided by cysteine 143, cysteine 146, cysteine 180, and histidine 183.

The protein belongs to the thymidine kinase family. As to quaternary structure, homotetramer.

The protein resides in the cytoplasm. It carries out the reaction thymidine + ATP = dTMP + ADP + H(+). The polypeptide is Thymidine kinase (Lactococcus lactis subsp. lactis (strain IL1403) (Streptococcus lactis)).